Reading from the N-terminus, the 192-residue chain is Imidazoleglycerol-phosphate dehydratase (192 aa).

Belongs to the imidazoleglycerol-phosphate dehydratase family.

The protein resides in the cytoplasm. The catalysed reaction is D-erythro-1-(imidazol-4-yl)glycerol 3-phosphate = 3-(imidazol-4-yl)-2-oxopropyl phosphate + H2O. Its pathway is amino-acid biosynthesis; L-histidine biosynthesis; L-histidine from 5-phospho-alpha-D-ribose 1-diphosphate: step 6/9. The polypeptide is Imidazoleglycerol-phosphate dehydratase (Carboxydothermus hydrogenoformans (strain ATCC BAA-161 / DSM 6008 / Z-2901)).